A 362-amino-acid chain; its full sequence is S-adenosylmethionine decarboxylase proenzyme (362 aa).

Residues Glu13 and Glu16 contribute to the active site. Ser73 (schiff-base intermediate with substrate; via pyruvic acid) is an active-site residue. Ser73 bears the Pyruvic acid (Ser); by autocatalysis mark. Catalysis depends on Cys87, which acts as the Proton donor; for catalytic activity. Active-site proton acceptor; for processing activity residues include Ser236 and His249.

Belongs to the eukaryotic AdoMetDC family. It depends on pyruvate as a cofactor. Is synthesized initially as an inactive proenzyme. Formation of the active enzyme involves a self-maturation process in which the active site pyruvoyl group is generated from an internal serine residue via an autocatalytic post-translational modification. Two non-identical subunits are generated from the proenzyme in this reaction, and the pyruvate is formed at the N-terminus of the alpha chain, which is derived from the carboxyl end of the proenzyme. The post-translation cleavage follows an unusual pathway, termed non-hydrolytic serinolysis, in which the side chain hydroxyl group of the serine supplies its oxygen atom to form the C-terminus of the beta chain, while the remainder of the serine residue undergoes an oxidative deamination to produce ammonia and the pyruvoyl group blocking the N-terminus of the alpha chain.

It catalyses the reaction S-adenosyl-L-methionine + H(+) = S-adenosyl 3-(methylsulfanyl)propylamine + CO2. It functions in the pathway amine and polyamine biosynthesis; S-adenosylmethioninamine biosynthesis; S-adenosylmethioninamine from S-adenosyl-L-methionine: step 1/1. This chain is S-adenosylmethionine decarboxylase proenzyme (SAMDC), found in Datura stramonium (Jimsonweed).